We begin with the raw amino-acid sequence, 28 residues long: Mast cell degranulating peptide (28 aa).

Cystine bridges form between C2–C18 and C4–C22.

In terms of tissue distribution, expressed by the venom gland.

It localises to the secreted. In terms of biological role, mast cell degranulating peptide. This chain is Mast cell degranulating peptide, found in Bombus pensylvanicus (American bumblebee).